Consider the following 260-residue polypeptide: NAD-capped RNA hydrolase NudC (260 aa).

Residue R69 participates in substrate binding. Zn(2+) is bound by residues C98 and C101. Residue E111 participates in substrate binding. C116 and C119 together coordinate Zn(2+). Y124 is a binding site for substrate. The 124-residue stretch at 125–248 (PQIAPCIIVA…TVARRLIEDT (124 aa)) folds into the Nudix hydrolase domain. Residues A158, E174, and E178 each contribute to the a divalent metal cation site. Residues 159–180 (GFVEVGETLEQTVVREVMEESQ) carry the Nudix box motif. Position 192 to 199 (192 to 199 (QPWPFPHS)) interacts with substrate. Residue E219 coordinates a divalent metal cation. A241 serves as a coordination point for substrate.

This sequence belongs to the Nudix hydrolase family. NudC subfamily. Homodimer. It depends on Mg(2+) as a cofactor. Requires Mn(2+) as cofactor. Zn(2+) is required as a cofactor.

The catalysed reaction is a 5'-end NAD(+)-phospho-ribonucleoside in mRNA + H2O = a 5'-end phospho-adenosine-phospho-ribonucleoside in mRNA + beta-nicotinamide D-ribonucleotide + 2 H(+). It catalyses the reaction NAD(+) + H2O = beta-nicotinamide D-ribonucleotide + AMP + 2 H(+). The enzyme catalyses NADH + H2O = reduced beta-nicotinamide D-ribonucleotide + AMP + 2 H(+). In terms of biological role, mRNA decapping enzyme that specifically removes the nicotinamide adenine dinucleotide (NAD) cap from a subset of mRNAs by hydrolyzing the diphosphate linkage to produce nicotinamide mononucleotide (NMN) and 5' monophosphate mRNA. The NAD-cap is present at the 5'-end of some mRNAs and stabilizes RNA against 5'-processing. Has preference for mRNAs with a 5'-end purine. Catalyzes the hydrolysis of a broad range of dinucleotide pyrophosphates. The polypeptide is NAD-capped RNA hydrolase NudC (Pectobacterium atrosepticum (strain SCRI 1043 / ATCC BAA-672) (Erwinia carotovora subsp. atroseptica)).